Reading from the N-terminus, the 248-residue chain is 2,3-bisphosphoglycerate-dependent phosphoglycerate mutase (248 aa).

Residues 8–15 (RHGESGWN) and R58 contribute to the substrate site. The active-site Tele-phosphohistidine intermediate is H9. The tract at residues 82 to 101 (GTGEDRTEREDGSRKDRKEK) is disordered. The active-site Proton donor/acceptor is the E124. Substrate-binding positions include 124–127 (ERYY) and K135.

Belongs to the phosphoglycerate mutase family. BPG-dependent PGAM subfamily.

The enzyme catalyses (2R)-2-phosphoglycerate = (2R)-3-phosphoglycerate. Its pathway is carbohydrate degradation; glycolysis; pyruvate from D-glyceraldehyde 3-phosphate: step 3/5. Functionally, catalyzes the interconversion of 2-phosphoglycerate and 3-phosphoglycerate. The polypeptide is 2,3-bisphosphoglycerate-dependent phosphoglycerate mutase (Methanosarcina acetivorans (strain ATCC 35395 / DSM 2834 / JCM 12185 / C2A)).